The chain runs to 150 residues: UPF0102 protein sll0189 (150 aa).

It belongs to the UPF0102 family.

The polypeptide is UPF0102 protein sll0189 (Synechocystis sp. (strain ATCC 27184 / PCC 6803 / Kazusa)).